Here is a 136-residue protein sequence, read N- to C-terminus: Large ribosomal subunit protein uL16 (136 aa).

It belongs to the universal ribosomal protein uL16 family. As to quaternary structure, part of the 50S ribosomal subunit.

Functionally, binds 23S rRNA and is also seen to make contacts with the A and possibly P site tRNAs. This chain is Large ribosomal subunit protein uL16, found in Ehrlichia chaffeensis (strain ATCC CRL-10679 / Arkansas).